We begin with the raw amino-acid sequence, 309 residues long: Metal ABC transporter substrate-binding lipoprotein SsaB (309 aa).

Residues 1–19 (MKKLGFLSLLLLAVCTLFA) form the signal peptide. Cys20 carries N-palmitoyl cysteine lipidation. The S-diacylglycerol cysteine moiety is linked to residue Cys20. The a divalent metal cation site is built by His67, His139, Glu205, and Asp280.

It belongs to the bacterial solute-binding protein 9 family. Lipoprotein receptor antigen (Lrai) subfamily. Homodimer and homotrimer.

The protein localises to the cell membrane. Part of an ATP-binding cassette (ABC) transport system involved in metal import. Binds a metal with high affinity and specificity and delivers it to the membrane permease for translocation into the cytoplasm. Also acts as an adhesin which is involved on adherence to extracellular matrix. It is an important factor in the pathogenesis and infection. May contribute to the formation and accumulation of dental plaque. The sequence is that of Metal ABC transporter substrate-binding lipoprotein SsaB (ssaB) from Streptococcus sanguinis.